The following is a 276-amino-acid chain: MKLKTILCAALLLVAGQAAAQEKSITIATEGGYAPWNFSGPGGKLDGFEIDLANALCEKMKAKCQIVAQNWDGIMPSLTGKKYDAIMAAMSVTPKRQEVIGFSIPYAAGINGFAVMGDSKLAEMPGLGETYSLDSQADAAKKAIADISSFLNGTTVGVQGSTTASTFLDKYFKGSVDIKEYKSVEEHNLDLTSGRLDAVLANATVLAAAIEKPEMKGAKLVGPLFSGGEFGVVAVGLRKEDTALKADFDAAIKAASEDGTIKTLSLKWFKVDVTPQ.

Residues 1–20 (MKLKTILCAALLLVAGQAAA) form the signal peptide. Residues cysteine 57 and cysteine 64 are joined by a disulfide bond.

The protein belongs to the bacterial solute-binding protein 3 family.

It is found in the periplasm. Functionally, component of the octopine active transport system probably consisting of four subunits: Q, M, P and T. This is Octopine-binding periplasmic protein (occT) from Agrobacterium tumefaciens (strain Ach5).